A 1861-amino-acid polypeptide reads, in one-letter code: Polyketide synthase 2 (1861 aa).

The 417-residue stretch at 109 to 525 folds into the Ketosynthase family 3 (KS3) domain; that stretch reads DSKIAIIGMS…GGNSALLLED (417 aa). Catalysis depends on for beta-ketoacyl synthase activity residues cysteine 264, histidine 399, and histidine 441. Residues 626-931 are malonyl-CoA:ACP transacylase (MAT) domain; the sequence is GFVFSGQGAQ…PSLHRKDDGW (306 aa). Serine 716 (for acyl/malonyl transferase activity) is an active-site residue. Residues 1008–1312 form a product template (PT) domain region; the sequence is TSSVQKVIQQ…VFGGMTVLPP (305 aa). The tract at residues 1012-1146 is N-terminal hotdog fold; it reads QKVIQQTDGP…CILRFADPKS (135 aa). The 307-residue stretch at 1012-1318 folds into the PKS/mFAS DH domain; that stretch reads QKVIQQTDGP…VLPPRRGADA (307 aa). The active-site Proton acceptor; for dehydratase activity is histidine 1045. The segment at 1174–1318 is C-terminal hotdog fold; the sequence is DSLLSKGIVY…VLPPRRGADA (145 aa). Aspartate 1232 functions as the Proton donor; for dehydratase activity in the catalytic mechanism. In terms of domain architecture, Carrier 1 spans 1356 to 1433; sequence SPQSGAIHRI…ELRLFLAADQ (78 aa). Serine 1393 is modified (O-(pantetheine 4'-phosphoryl)serine). The disordered stretch occupies residues 1441-1470; the sequence is CESSNGQHTPQTSDKGSGTLTAQKPDHDTD. Polar residues predominate over residues 1442–1462; that stretch reads ESSNGQHTPQTSDKGSGTLTA. Residues 1472–1546 enclose the Carrier 2 domain; the sequence is EMTLNRVCAI…SLQKTLRGTE (75 aa). At serine 1506 the chain carries O-(pantetheine 4'-phosphoryl)serine. Residues 1582–1855 form a thioesterase (TE) domain region; that stretch reads ASAPHATSIL…IIEMSNLIGD (274 aa). Residue serine 1685 is the For thioesterase activity of the active site.

Polyketide synthase; part of the Pks2 gene cluster that mediates the formation of infectious structures (appressoria), enabling these fungi to kill insects faster. The product of the Pks2 gene cluster is different from the one of Pks1 and has still not been identified. In Metarhizium acridum (strain CQMa 102), this protein is Polyketide synthase 2.